Reading from the N-terminus, the 281-residue chain is Trypsin zeta (281 aa).

An N-terminal signal peptide occupies residues Met1 to Gly23. Residues Leu24–Arg39 constitute a propeptide, activation peptide. The region spanning Ile40–Ala279 is the Peptidase S1 domain. Cys73 and Cys89 are disulfide-bonded. Catalysis depends on charge relay system residues His88 and Asp135. Intrachain disulfides connect Cys199–Cys219 and Cys231–Cys255. Ser235 serves as the catalytic Charge relay system.

This sequence belongs to the peptidase S1 family.

The protein resides in the secreted. It is found in the extracellular space. The enzyme catalyses Preferential cleavage: Arg-|-Xaa, Lys-|-Xaa.. This Drosophila erecta (Fruit fly) protein is Trypsin zeta (zetaTry).